We begin with the raw amino-acid sequence, 1683 residues long: E3 ubiquitin-protein ligase SHPRH (1683 aa).

Residues Met-1–Pro-43 are disordered. Residues Arg-12 to Glu-32 are compositionally biased toward basic and acidic residues. Ser-266 is subject to Phosphoserine. Positions Tyr-307–Thr-389 constitute a Helicase ATP-binding; first part domain. Residue Asp-373–Thr-380 participates in ATP binding. Positions Gln-438–Lys-512 constitute an H15 domain. The disordered stretch occupies residues Lys-525–Ser-607. A compositionally biased stretch (basic and acidic residues) spans Ile-534–Asp-547. The span at Lys-568 to Lys-588 shows a compositional bias: basic residues. Position 635 is a phosphoserine (Ser-635). The PHD-type zinc finger occupies Arg-658–Ala-709. One can recognise a Helicase ATP-binding; second part domain in the interval Met-710–Glu-868. A DEAQ box motif is present at residues Asp-819 to Gln-822. An RING-type zinc finger spans residues Cys-1432 to Arg-1479. One can recognise a Helicase C-terminal domain in the interval Ala-1514 to Ala-1672.

This sequence belongs to the SNF2/RAD54 helicase family. As to quaternary structure, homodimer. Interacts with HLTF, PCNA, UBE2N and RAD18. Broadly expressed.

It catalyses the reaction S-ubiquitinyl-[E2 ubiquitin-conjugating enzyme]-L-cysteine + [acceptor protein]-L-lysine = [E2 ubiquitin-conjugating enzyme]-L-cysteine + N(6)-ubiquitinyl-[acceptor protein]-L-lysine.. Its pathway is protein modification; protein ubiquitination. E3 ubiquitin-protein ligase involved in DNA repair. Upon genotoxic stress, accepts ubiquitin from the UBE2N-UBE2V2 E2 complex and transfers it to 'Lys-164' of PCNA which had been monoubiquitinated by UBE2A/B-RAD18, promoting the formation of non-canonical poly-ubiquitin chains linked through 'Lys-63'. In Homo sapiens (Human), this protein is E3 ubiquitin-protein ligase SHPRH (SHPRH).